Reading from the N-terminus, the 291-residue chain is Nitrogenase iron protein 1 (291 aa).

ATP is bound at residue 10–17 (GKGGIGKS). [4Fe-4S] cluster is bound at residue Cys-98. An ADP-ribosylarginine; by dinitrogenase reductase ADP-ribosyltransferase modification is found at Arg-101. Cys-133 contacts [4Fe-4S] cluster.

The protein belongs to the NifH/BchL/ChlL family. As to quaternary structure, homodimer. It depends on [4Fe-4S] cluster as a cofactor. Post-translationally, the reversible ADP-ribosylation of Arg-101 inactivates the nitrogenase reductase and regulates nitrogenase activity.

The enzyme catalyses N2 + 8 reduced [2Fe-2S]-[ferredoxin] + 16 ATP + 16 H2O = H2 + 8 oxidized [2Fe-2S]-[ferredoxin] + 2 NH4(+) + 16 ADP + 16 phosphate + 6 H(+). Its function is as follows. The key enzymatic reactions in nitrogen fixation are catalyzed by the nitrogenase complex, which has 2 components: the iron protein (component 2) and a component 1 which is either a molybdenum-iron protein, a vanadium-iron, or an iron-iron protein. This chain is Nitrogenase iron protein 1 (nifH1), found in Azotobacter chroococcum mcd 1.